Consider the following 531-residue polypeptide: Na(+)/H(+) antiporter NhaB (531 aa).

A run of 12 helical transmembrane segments spans residues 13–33, 34–54, 90–110, 121–141, 145–165, 206–226, 242–262, 308–328, 352–372, 394–414, 456–476, and 482–502; these read FLGKAPDWYKIAIISFLIINP, LVFFFVDPFAAGWLLVVEFIF, LVANIEVLLLLVFMVAGIYFM, ILIGIKSKTALSVAFCFTAAF, FLDALTVIAVVISVAVGFYAI, LLMHAGVGTALGGVMTMVGEP, FIIRMLPVTAPVFICGLLTCV, VIAVWLIVALAMHLAAVGLIG, EEALPFTALLAVFFAIVAVII, LALFYVANGILSMVSDNVFVG, GQAAFLFLLTSALAPLIQLSY, and MALPYTIVLALVGLFGISFLL.

The protein belongs to the NhaB Na(+)/H(+) (TC 2.A.34) antiporter family.

It is found in the cell inner membrane. It carries out the reaction 2 Na(+)(in) + 3 H(+)(out) = 2 Na(+)(out) + 3 H(+)(in). Functionally, na(+)/H(+) antiporter that extrudes sodium in exchange for external protons. This chain is Na(+)/H(+) antiporter NhaB, found in Aliivibrio salmonicida (strain LFI1238) (Vibrio salmonicida (strain LFI1238)).